Consider the following 296-residue polypeptide: NAD kinase (296 aa).

The active-site Proton acceptor is Asp-73. Residues 73–74, Lys-78, 151–152, Arg-178, Asp-180, and 191–196 each bind NAD(+); these read DG, NE, and TAHAMS.

The protein belongs to the NAD kinase family. A divalent metal cation is required as a cofactor.

It is found in the cytoplasm. The enzyme catalyses NAD(+) + ATP = ADP + NADP(+) + H(+). Functionally, involved in the regulation of the intracellular balance of NAD and NADP, and is a key enzyme in the biosynthesis of NADP. Catalyzes specifically the phosphorylation on 2'-hydroxyl of the adenosine moiety of NAD to yield NADP. The polypeptide is NAD kinase (Francisella tularensis subsp. tularensis (strain WY96-3418)).